A 4015-amino-acid chain; its full sequence is MAANDSNNQTKPQLPEEPVAIVGSSCRFPGSSNSPSKLWDLLRQPRDVLKEFDPDRLNLKRFYHPDGDTHGSTDVTNKSYLLEEDSRLFDASFFTINPAEAAGMDPQQRILLETVYEAFESAGMTLEQLRGSLTAVHVGTMTNDYAGIQLRDLETIAKYNATGTANSIVSNRISYVFDLKGPSETIDTACSSSLVALHHAARGLLNGDCETAVVAGVNLIYDAASYIAESKLHMLSPDSQSRMWDKSANGYARGEGAAALLLKPLSRALRDGDHIEGVIRATGVNSDGQSPGITMPFAPTQAALIRQTYRRAGLDPVKDRPQYFECHGTGTPAGDPVEARAISEAFEPSADNPIYVGSIKTIIGHLEGCAGLAGVMKVILALKNRTIPPNMLFNELNPAIAPFYGPLQIPKKAMPWPELPENTPIRASVNSFGFGGTNAHVIIESFESSTPSSDSEKCEEGALGPLLFSAGSGASLLHTVQAYVQYLDQNPSVDLRDLSWLLQTRRSTHRVRTHFSGTSSDAILESMIKFVNNNEKTPSTEVGHQPKLINPKEVPGILGVFTGQGAQWPQMGKELIGKSPIFRRTLEDCDATLQALPSSDIPKWSLVKELMANASSSRVAEAAISQPLCTAVQLGLVNMLKASGLNFDAVVGHSSGEIAATYASGIINLQAAIQIAYYRGFHAKLAKGEKGQQGGMLAAGLTLDKAKQLCLREEFVGRLQVAASNAPQTVTLSGDLDAIEEVKKYLDEENVFARQLKVDTAYHSHHMKPCAEPYLKSLLACDIEVRKPTPGQCIWNSSVRGDTGLLKGDLSSLKGPYWVANMVQTVLFSQAVESSIWHGGPWDLAIEVGPHPALKGPTEQTLKAVYGVVPLYTGVLKRGASDVEAFSTAIGVTWSQLGPSFVDFAGYRKTFYESEPPTPKVIKDLPGYSWDHDKVYWRESRISKRYRTGRDQTHELLGRRTPDDNEFELRWRNVLKLSEMPWLRGHEVLEEVLLPGAAYVSIAVEASKHIATSKGKSIELLEVEDVDIQRPVVVPDNKEGVETLFTARLLPGSSSDKVLKALFSYYICNDQSTGTMVHTCSGRLSVHLGEAKEDVLPQRDPVPQNLVNINTDRAYGMFKDIGLNYTGVFRSIKESSRTLQYSAATGIWPEGSLSDKYLVHPAMLDVAFQTLFIARAHPASRLITSALLPSHIERIQVSPSVPILHARENSDEIKADFDCWVVHQTASSLTGDLNIYDKVSGKTFLQVEGLTTKMVGEQDASGDRPVFTKTVWGSDGSLGLDEPERDPVGDAEGLSLAEAAERMALFYMKRVVKEISPEERTKFQWYHQRMFEAFEQHLVNVGSGSHPMLKSEWLSDDSSIMDGLDRIHPTSIDLKLLRACGENMPDVVREKTQLLEVMSKDDMLNRFYMDNCAARINNDIAKVVKQISFKFPRANILEIGAGTGGTTWSILKDINDAYDSYTFTDISSGFFPKAAEKFSDFAHKMIFKTLDVEKQPSEQGFAENSYDVIVAANVLHATRSLETTLRNARSLLRPGGYLILMEITNPESLRTTFIFGGFSGWWLSEEPHRKLGPVVTAMDWDTVLNDTGYSGADMVVHDLAEESKHLTSLIVSQAVDDDFLRLREPLSNLADMSAPTESILVIGGKKLLTSKMVNEINKLLPKSWKRHISSAGSIDDIDINELKPGTEVISLQELDDPLFSTPMTAERMSTIQNLMMSAKTLLWVTTAGKSHAPRASMFHGIARIVPSELQHLQIQVLGLEAGSTPAIATRHCVEAFLRLRGTSDTTREMLWAIEPEVEIMADGQVLIPRVVPDETLNQTYNASRRVVTKTVDATDLAVEAVAGPTKMMLQTAELQAGERKTRIQVKYALHLPAMDGKGIYVVYGQRQDDTSSFVLAVSKSNSSIVDVDSKHAVSVSDNCEPATLNVLATYLIARAIATLSKQAGSVLLSEPEESLAAIVATETAKQGTQAYFLSSKKVSPVEWIKVHANASKRAIQKAVPHDVQLLIDCSGIEASGNAVMASMPLHCVERQLDAHLLFDALESTESKPESLLEEAYQYATQLITQEQVQSECEVFPASDLPLTNMLSLVHKKYVTDWQQRDSLVVSVPPLDLEGIFKADKTYLMVGAAGGLGLSICEWMIRNGAKNLIITSRKPQVDQNMIEEASRVGATVKVMAMDVSSKESVAEVVQQAQEIMPPIAGVCNAAMVLSDKMFLDMDVDQLNGTLAAKVYGTEHLDAVFADAPLDFFIVLSSTATTIGNIGQANYHVANLFMTSLVAQRRARGLAGSVIHIGYVADVGYVTRQDRERQLEQHFRNVRLMALSETDVHHAFAEAVRGGRPGNTVGSPDIIMGLEPASVPLEPERQTLWLSNPCFGHLVPSTLQNDSSQTGGTGNGSSVRRQVEEAQTEDEAVDAVLDGFCAKLEAILQLREGSVKENVQRAVIDLGIDSLVAVEIRTWFLKELGAEVPVVKILGGDTVLQICTTAAKKVMANAMKKKEEDAVAEEGGREAASKKEPAPAASAPTPAPVAPSLLDVPARAFEPDSATISEVGDDSAFSNKGSSSSATGASSPKELSDSESVPDTSKDQSHVRPETVRDERMSPAQARIWFLTKHLDDPSAYNMVFHYRVKGPLKTVRLRHALQVATGHHESLRTLFYSRLEDGQPMQGVMPASAYELKHVPGADEADLKKELALLKAREWDLENGRTFSVSVLSRAADEHDVVFGYHHIIMDVVGWYFFVRDLDRAYRMQPFDKKISGSYVDYSVMQLSQKNTAAASDDLAFWQKEFSTVPDPIPLLPIAAVSARPTDSGRKVSHHEYLELDPAQNLAVKETCEKLRISPFHFHVAVLRALIGGYTNIDDMCIGVVDANRGDERFAQTVGCFVNMLPVRVEAPSDATFADIARSASRKALMAFAHSSAPLDMILDAVKAPRSSETTPLFQVAVNYRTGGVWDLPMGDCQMKLSLTDGKDAENPFDISLGIAETGKGCVIEMHCQKTLYSSDATRTLLNTYLRLVDTFCKNTHVKLKDCVIHDQAKVSEALQIGKGPTTDFGWPSTLSHRVLETCLKSPKNAAIQFKGELLSYEQLASRIHLVAAAIVRAGASKGSRVAVLCEPSADAIISMLATLHIGGVYIPMDVSLPTARHAAMMNGGQPTLLLSHAATKHRVEDLVNETGSTISVLQVDTISSVEEKETVSCAAEPHNNAVLLFTSGSTGTPKGIMLSQANFVNHLALKTDRLQLGQENVLQQSSMGFDMSLIQMFCALANGGCLVIAPSEMRRDPVELTNLVHNSQISLTIATPSEYLAWLRYGTASLKDHTIWRHACMGGEPVSRQLKTEFWRLDLANLQLTNCYGPTEITAAATFETIRLDDQDDDNDRAQHAVGKALPNYSVRILDTAGRPQPVDHIGEICIGGASVALGYLGLPEQTKAKFTVDPVSGERLYLTGDKGKLLSDGTLLCLGRLDGDTQIKHRGLRIELQEVESALIQTANGLFSSAVVSARGSILVAHATISQSQAEPSESDLAKILSRLKLPQYFIPATIGILPTMPTTANGKLDRKAIASLPLPQKVTGEEGPQEKMNIREGELRLLWERVLPDTATTTPLGPSSDFFLCGGNSMLLMKLQAAIKESIGIEISTRVLYQASTLREMALCVDEQREEQADALEQHFDWQAETSLPKWLLDQIEDLPKTTKQPPKPNGIDILMTGATSFIGGRLLRSLVRSPSVRKVHCVAVLADEQDQLYQDEKVKCYTGSLLSSTLGLNNGERDQLARNVDVVIHAGSSGHCLNTYGSLRTPNLVSLQFLASLALPRSIPLLLLSSNRVPLLSGNTALPPTSVAAFPPATDGREGYTATKWASEVFLEKLVGAVQKKAPRPWVASVHRPCVVVSEHAPNSDALNAILRYSASMKCVPHLESATGYLDFASVESIVDSMAESAIEMATGNVTDQPSIRFQHHSGGVKVPIGDFKVHMENVYGGNFEEVHLEEWMHRAAAAGLDPLITAYMEGIIEAGAPIVFPYLGETV.

Residues 1-12 (MAANDSNNQTKP) show a composition bias toward polar residues. Residues 1-20 (MAANDSNNQTKPQLPEEPVA) are disordered. The Ketosynthase family 3 (KS3) domain maps to 16-445 (EEPVAIVGSS…GTNAHVIIES (430 aa)). Catalysis depends on for beta-ketoacyl synthase activity residues C190, H327, and H365. Residues 560-885 (VFTGQGAQWP…LKRGASDVEA (326 aa)) are malonyl-CoA:ACP transacylase (MAT) domain. Residues 954–1091 (HELLGRRTPD…GRLSVHLGEA (138 aa)) are N-terminal hotdog fold. A dehydratase (DH) domain region spans residues 954–1260 (HELLGRRTPD…TTKMVGEQDA (307 aa)). A PKS/mFAS DH domain is found at 954–1261 (HELLGRRTPD…TKMVGEQDAS (308 aa)). Residue H986 is the Proton acceptor; for dehydratase activity of the active site. Residues 1106–1261 (LVNINTDRAY…TKMVGEQDAS (156 aa)) are C-terminal hotdog fold. Catalysis depends on D1165, which acts as the Proton donor; for dehydratase activity. Residues 1400 to 1598 (KDDMLNRFYM…YSGADMVVHD (199 aa)) are methyltransferase (MT) domain. Residues 2120–2261 (KTYLMVGAAG…STATTIGNIG (142 aa)) are ketoreductase (KR) domain. A disordered region spans residues 2379–2405 (STLQNDSSQTGGTGNGSSVRRQVEEAQ). The Carrier 1 domain occupies 2409–2488 (EAVDAVLDGF…QICTTAAKKV (80 aa)). At S2448 the chain carries O-(pantetheine 4'-phosphoryl)serine. Basic and acidic residues predominate over residues 2498 to 2515 (EDAVAEEGGREAASKKEP). 2 disordered regions span residues 2498–2529 (EDAV…PVAP) and 2545–2597 (TISE…VRDE). Positions 2553–2569 (SAFSNKGSSSSATGASS) are enriched in low complexity. Over residues 2582-2597 (TSKDQSHVRPETVRDE) the composition is skewed to basic and acidic residues. Positions 2598-3029 (RMSPAQARIW…HVKLKDCVIH (432 aa)) are condensation (C) domain. An adenylation (A) (KR) domain region spans residues 3063-3459 (LKSPKNAAIQ…GTLLCLGRLD (397 aa)). A reductase (RED) domain region spans residues 3063–3459 (LKSPKNAAIQ…GTLLCLGRLD (397 aa)). In terms of domain architecture, Carrier 2 spans 3572-3651 (EKMNIREGEL…EMALCVDEQR (80 aa)). O-(pantetheine 4'-phosphoryl)serine is present on S3611.

The protein in the C-terminal section; belongs to the NRP synthetase family.

It carries out the reaction L-tyrosine + holo-[ACP] + 7 malonyl-CoA + acetyl-CoA + 8 AH2 + 2 S-adenosyl-L-methionine + ATP + 4 H(+) = N-[(4E,6E,10S,12Z,14E)-6,10-dimethyl-3-oxohexadeca-4,6,12,14-tetraenoyl]-L-tyrosyl-[ACP] + 8 A + AMP + 2 S-adenosyl-L-homocysteine + 7 CO2 + diphosphate + 8 CoA + 6 H2O. Its pathway is mycotoxin biosynthesis. Its function is as follows. Hybrid PKS-NRPS synthetase; part of the gene cluster that mediates the biosynthesis of ilicicolin H, a 4-hydroxy-2-pyridonealkaloid that has potent and broad antifungal activities by inhibiting the mitochondrial respiration chain. IccA assembles the backbone of ilicicolin H. The PKS portion and trans-acting enoyl reductase iccB work together to construct an octaketide, and two methyl groups are introduced by the MT domain during the chain assembly. The nascent chain is then condensed with tyrosine, catalyzed by the C domain, and the resulting PKS-NRPS hybrid is offloaded by the RED domain to form an advanced tetramic acid intermediate. The biosynthesis of ilicicolin H starts with formation of the tetramic acid by the hybrid PKS-NRPS synthetase iccA with the partnering trans-enoyl reductase iccB since iccA lacks a designated enoylreductase (ER) domain. The cytochrome P450 monooxygenase iccC then catalyzes the ring expansion of the tetramate to the acyclic 2-pyridone. The pericyclase iccD further converts the acyclic 2-pyridone into 8-epi-ilicicolin H. Finally, the epimerase iccE converts 8-epi-ilicicolin H into ilicicolin H via epimerization. IccA to iccE are sufficient for ilicicolin H biosynthesis and the roles of the remaining enzymes, iccF, iccG and iccH within the pathway have still to be determined. The protein is Hybrid PKS-NRPS synthetase iccA of Talaromyces variabilis (Penicillium variabile).